The sequence spans 500 residues: Cytochrome P450 monooxygenase astJ (500 aa).

A heme-binding site is contributed by C440.

This sequence belongs to the cytochrome P450 family. Requires heme as cofactor.

It functions in the pathway secondary metabolite biosynthesis; terpenoid biosynthesis. Its function is as follows. Cytochrome P450 monooxygenase; part of the gene cluster that mediates the biosynthesis of astellolides, drimane-type sesquiterpene esters that show antimicrobial, anti-inflammatory, and anti-tumor activities. The first step in astellolide biosynthesis is performed by the sesquiterpene cyclase astC that catalyzes the formation of drimanyl pyrophosphate from farnesyl pyrophosphate. Drimanyl pyrophosphate is then dephosphorylated by the sesquiterpene phosphatase astI to produce drimanyl monophosphate which is further dephosphorylated to drim-8-ene-11-ol by atsK. Drim-8-ene-11-ol is converted to confertifolin, probably by the cytochrome P450 monooxygenase astD and/or the dehydrogenase astE. The cytochrome P450 monooxygenases astB, astF and astJ then hydroxylate confertifolin at C6, C14, or C15 to form trihydroxy confertifolin. The nonribosomal peptide synthetase astA catalyzes ester bond formation between trihydroxy contifolin and benzoic acid (BA) or 4-hydroxy benzoic acid (4HBA), leading to the formation of dideacetyl astellolides A and B, respectively. Finally, the O-acetyltransferase astG converts dideacetyl astellolides A and B into deacetyl astellolides A and B. The polypeptide is Cytochrome P450 monooxygenase astJ (Aspergillus oryzae (strain ATCC 42149 / RIB 40) (Yellow koji mold)).